The sequence spans 338 residues: Hydroxyproline O-galactosyltransferase HPGT1 (338 aa).

The Cytoplasmic segment spans residues 1 to 12 (MARKGSSIRLSS). A helical; Signal-anchor for type II membrane protein membrane pass occupies residues 13–32 (SRISTLLLFMFATFASFYVA). Over 33–338 (GRLWQESQTR…WSSEAICAGV (306 aa)) the chain is Lumenal.

The protein belongs to the glycosyltransferase 31 family. The cofactor is Mn(2+). In terms of tissue distribution, expressed in roots, rosette leaves, cauline leaves, stems, flowers and siliques.

Its subcellular location is the golgi apparatus membrane. It participates in protein modification; protein glycosylation. Its function is as follows. Possesses hydroxyproline O-galactosyltransferase activity. Transfers galactose from UDP-galactose to hydroxyproline residues in the arabinogalactan proteins (AGPs). Is specific for AGPs containing non-contiguous peptidyl hydroxyproline residues. The addition of galactose onto the peptidyl hydroxyproline residues in AGP core proteins represents the first committed step in arabinogalactan polysaccharide addition. AGP glycans play essential roles in both vegetative and reproductive plant growth. This is Hydroxyproline O-galactosyltransferase HPGT1 from Arabidopsis thaliana (Mouse-ear cress).